We begin with the raw amino-acid sequence, 572 residues long: DNA mismatch repair protein MutL (572 aa).

The protein belongs to the DNA mismatch repair MutL/HexB family.

Its function is as follows. This protein is involved in the repair of mismatches in DNA. It is required for dam-dependent methyl-directed DNA mismatch repair. May act as a 'molecular matchmaker', a protein that promotes the formation of a stable complex between two or more DNA-binding proteins in an ATP-dependent manner without itself being part of a final effector complex. This Dictyoglomus turgidum (strain DSM 6724 / Z-1310) protein is DNA mismatch repair protein MutL.